The chain runs to 354 residues: Polyribonucleotide 5'-hydroxyl-kinase PF0112 (354 aa).

36–43 contributes to the ATP binding site; it reads GDVDTGKT.

The cofactor is a divalent metal cation.

The enzyme catalyses a 5'-end dephospho-2'-deoxyribonucleoside-DNA + ATP = a 5'-end 5'-phospho-2'-deoxyribonucleoside-DNA + ADP + H(+). It carries out the reaction a 5'-end dephospho-ribonucleoside-RNA + ATP = a 5'-end 5'-phospho-ribonucleoside-RNA + ADP + H(+). Its function is as follows. Polynucleotide kinase that can phosphorylate the 5'-hydroxyl groups of both single-stranded RNA (ssRNA) and single-stranded DNA (ssDNA). Exhibits a strong preference for ssRNA. This is Polyribonucleotide 5'-hydroxyl-kinase PF0112 from Pyrococcus furiosus (strain ATCC 43587 / DSM 3638 / JCM 8422 / Vc1).